We begin with the raw amino-acid sequence, 469 residues long: UDP-N-acetylmuramate--L-alanine ligase (469 aa).

113–119 (GTHGKTT) lines the ATP pocket.

It belongs to the MurCDEF family.

The protein resides in the cytoplasm. It catalyses the reaction UDP-N-acetyl-alpha-D-muramate + L-alanine + ATP = UDP-N-acetyl-alpha-D-muramoyl-L-alanine + ADP + phosphate + H(+). Its pathway is cell wall biogenesis; peptidoglycan biosynthesis. Cell wall formation. This is UDP-N-acetylmuramate--L-alanine ligase from Neisseria meningitidis serogroup C / serotype 2a (strain ATCC 700532 / DSM 15464 / FAM18).